Here is a 396-residue protein sequence, read N- to C-terminus: MAKGKFERTKPHVNVGTIGHVDHGKTTLTAAITTVLTKKFGGEAKAYDQIDAAPEEKARGITINTAHVEYETANRHYAHVDCPGHADYVKNMITGAAQMDGAILVCSAADGPMPQTREHILLARQVGVPYIIVFLNKCDMVDDAELLELVEMEVRELLSKYDFPGDDTPIVKGSAKLALEGDTGELGEVAIMSLADALDTYIPTPERAVDGAFLMPVEDVFSISGRGTVVTGRVERGIVKVGEEIEIVGIKPTVKTTCTGVEMFRKLLDQGQAGDNVGILLRGTKREDVERGQVLAKPGSITPHTHFTAEVYVLSKDEGGRHTPFFNNYRPQFYFRTTDVTGSIELPKDKEMVMPGDNVSITVKLIAPIAMEEGLRFAIREGGRTVGAGVVAKIIE.

A tr-type G domain is found at 10 to 206; the sequence is KPHVNVGTIG…ALDTYIPTPE (197 aa). The interval 19–26 is G1; sequence GHVDHGKT. 19-26 contacts GTP; that stretch reads GHVDHGKT. Residue threonine 26 coordinates Mg(2+). A G2 region spans residues 60 to 64; the sequence is GITIN. The segment at 81-84 is G3; it reads DCPG. GTP contacts are provided by residues 81–85 and 136–139; these read DCPGH and NKCD. Residues 136–139 form a G4 region; that stretch reads NKCD. Positions 174-176 are G5; the sequence is SAK.

Belongs to the TRAFAC class translation factor GTPase superfamily. Classic translation factor GTPase family. EF-Tu/EF-1A subfamily. As to quaternary structure, monomer.

It localises to the cytoplasm. It carries out the reaction GTP + H2O = GDP + phosphate + H(+). Its function is as follows. GTP hydrolase that promotes the GTP-dependent binding of aminoacyl-tRNA to the A-site of ribosomes during protein biosynthesis. The polypeptide is Elongation factor Tu (Burkholderia cenocepacia (strain HI2424)).